The primary structure comprises 730 residues: Dual function macrocyclase-peptidase POPB (730 aa).

The interval 1–34 is disordered; that stretch reads MSSVTWAPGNYPSTRRSDHVDTYQSASKGEVPVP. Catalysis depends on charge relay system residues serine 577, aspartate 661, and histidine 698.

It belongs to the peptidase S9A family. Monomer.

It carries out the reaction Hydrolysis of Pro-|-Xaa &gt;&gt; Ala-|-Xaa in oligopeptides.. Functionally, dual function macrocyclase-peptidase involved in the biosynthesis of the highly toxic amanitin toxin family of macrocycles. Cleaves peptide bonds on the C-terminal side of prolyl residues. The enzyme first removes 10 residues from the N-terminus of a 35-residue substrate. Conformational trapping of the 25 amino-acid peptide forces the enzyme to release this intermediate rather than proceed to macrocyclization. The enzyme rebinds the 25 amino-acid peptide in a different conformation and catalyzes macrocyclization of the N-terminal eight residues. The sequence is that of Dual function macrocyclase-peptidase POPB from Galerina marginata (strain CBS 339.88).